The following is a 193-amino-acid chain: Chromophore lyase CpcS/CpeS 4 (193 aa).

It belongs to the CpcS/CpeS biliprotein lyase family.

In terms of biological role, covalently attaches a chromophore to Cys residue(s) of phycobiliproteins. In Trichodesmium erythraeum (strain IMS101), this protein is Chromophore lyase CpcS/CpeS 4.